A 193-amino-acid chain; its full sequence is MIQAILVFNNHGKPRLVRFYQRFPEEIQQQIVRETFHLVLKRDDNICNFLEGGSLIGGSDYKLIYRHYATLYFVFCVDSSESELGILDLIQVFVETLDKCFENVCELDLIFHMDKVHYILQEVVMGGMVLETNMNEIVAQIEAQNRLEKSEGGLSAAPARAVSAVKNINLPEMPRNINIGDLNIKVPNLSQFV.

The protein belongs to the adaptor complexes small subunit family. In terms of assembly, adaptor protein complex 3 (AP-3) is a heterotetramer composed of two large adaptins (delta-type subunit AP3D1 and beta-type subunit AP3B1 or AP3B2), a medium adaptin (mu-type subunit AP3M1 or AP3M2) and a small adaptin (sigma-type subunit APS1 or AP3S2). Interacts with AGAP1. AP-3 associates with the BLOC-1 complex.

The protein localises to the golgi apparatus. The protein resides in the cytoplasmic vesicle membrane. Part of the AP-3 complex, an adaptor-related complex which is not clathrin-associated. The complex is associated with the Golgi region as well as more peripheral structures. It facilitates the budding of vesicles from the Golgi membrane and may be directly involved in trafficking to lysosomes. In concert with the BLOC-1 complex, AP-3 is required to target cargos into vesicles assembled at cell bodies for delivery into neurites and nerve terminals. This Bos taurus (Bovine) protein is AP-3 complex subunit sigma-2 (AP3S2).